The primary structure comprises 246 residues: Deoxycytidylate 5-hydroxymethyltransferase (246 aa).

The active site involves C148.

The protein belongs to the thymidylate synthase family.

It carries out the reaction dCMP + (6R)-5,10-methylene-5,6,7,8-tetrahydrofolate + H2O = 5-hydroxymethyl-dCMP + (6S)-5,6,7,8-tetrahydrofolate. This is Deoxycytidylate 5-hydroxymethyltransferase (42) from Enterobacteria phage T6 (Bacteriophage T6).